Consider the following 334-residue polypeptide: MLDDRSKLLLKALVERYIAEGQPVGSRTLSRASGLELSPATIRNVMADLEDLGLIASPHTSAGRVPTAKGYRLFVDTMLTVQQEQLPTVQLMPEQPQKVIANAAHLLSSLSQFVGVVMAPRRASVFRHIEFLRLSEKRFLVIIVSPDGDVQNRVIFTEVDYSQSQLVEAANFLNANYAGLTMEQVRERLKLEVDKLRGEIAALMQAAVSVGSEAMSGSQDEVVFSGERNLLSVSDFSSNMSHLRRAFDLFEQKTQILRLLDISSRAEGVRIFIGGESQVVPFEELSVVSAPYEVDGQVVGTLGVIGPTRMSYDRMIQIVDITSKLVSNALSHRK.

Belongs to the HrcA family.

In terms of biological role, negative regulator of class I heat shock genes (grpE-dnaK-dnaJ and groELS operons). Prevents heat-shock induction of these operons. The polypeptide is Heat-inducible transcription repressor HrcA (Acidovorax sp. (strain JS42)).